Reading from the N-terminus, the 351-residue chain is Cytochrome c biogenesis protein CcsA (351 aa).

8 consecutive transmembrane segments (helical) span residues 17-37 (VLFL…LPAI), 38-58 (NALG…LLGA), 68-88 (LSNL…VHLI), 97-117 (LVGV…TLTL), 143-163 (MMLS…FLVI), 259-279 (IIGL…VWAN), 286-306 (WSWD…AAYL), and 320-340 (AILA…VNLL).

This sequence belongs to the CcmF/CycK/Ccl1/NrfE/CcsA family. In terms of assembly, may interact with ccs1.

The protein resides in the cellular thylakoid membrane. In terms of biological role, required during biogenesis of c-type cytochromes (cytochrome c6 and cytochrome f) at the step of heme attachment. The protein is Cytochrome c biogenesis protein CcsA of Nostoc sp. (strain PCC 7120 / SAG 25.82 / UTEX 2576).